The chain runs to 438 residues: Probable D-serine dehydratase (438 aa).

Residue Lys-114 is modified to N6-(pyridoxal phosphate)lysine.

This sequence belongs to the serine/threonine dehydratase family. DsdA subfamily. Requires pyridoxal 5'-phosphate as cofactor.

The enzyme catalyses D-serine = pyruvate + NH4(+). This is Probable D-serine dehydratase from Histophilus somni (strain 2336) (Haemophilus somnus).